We begin with the raw amino-acid sequence, 221 residues long: MIEKNINIDIATYIDHSFLKPTATPEDIEQCCNEAQYFGFPTVCVYPSAVSQAVKLLHGQKIAVCTVIGFPTGANTSSVKLYEAQEATENGATELDIMINLGQVKAGSSEEIYNEISAICEATGQTIKVILETNLLTDTEKRLAAEICMDAGANYLKTCSGWFGGATVTDVRFLNNISQGRVGIKASGGIKTLEQAYELIEAGATRLGTSHGVALVQSQNG.

The active-site Proton donor/acceptor is Asp-96. Lys-157 (schiff-base intermediate with acetaldehyde) is an active-site residue. Lys-185 functions as the Proton donor/acceptor in the catalytic mechanism.

This sequence belongs to the DeoC/FbaB aldolase family. DeoC type 1 subfamily.

It is found in the cytoplasm. It catalyses the reaction 2-deoxy-D-ribose 5-phosphate = D-glyceraldehyde 3-phosphate + acetaldehyde. It functions in the pathway carbohydrate degradation; 2-deoxy-D-ribose 1-phosphate degradation; D-glyceraldehyde 3-phosphate and acetaldehyde from 2-deoxy-alpha-D-ribose 1-phosphate: step 2/2. Functionally, catalyzes a reversible aldol reaction between acetaldehyde and D-glyceraldehyde 3-phosphate to generate 2-deoxy-D-ribose 5-phosphate. The sequence is that of Deoxyribose-phosphate aldolase from Crocosphaera subtropica (strain ATCC 51142 / BH68) (Cyanothece sp. (strain ATCC 51142)).